We begin with the raw amino-acid sequence, 1038 residues long: Inner tegument protein (1038 aa).

Residues 545–1038 (WGITPPVDVG…VPGNTSGSDP (494 aa)) are interaction with large tegument protein.

This sequence belongs to the herpesviridae inner tegument protein family. As to quaternary structure, interacts (via C-terminus) with the large tegument protein/LTP (via N-terminus).

It localises to the virion tegument. The protein resides in the host cytoplasm. The protein localises to the host nucleus. It is found in the host Golgi apparatus. Its subcellular location is the host trans-Golgi network. In terms of biological role, plays an essential role in cytoplasmic secondary envelopment during viral egress. Interacts with the capsid via the large tegument protein/LTP and participates in its transport to the host trans-Golgi network (TGN) where secondary envelopment occurs. Modulates tegumentation and capsid accumulation at the viral assembly complex. In Homo sapiens (Human), this protein is Inner tegument protein (21).